The primary structure comprises 185 residues: V-type ATP synthase subunit E (185 aa).

Belongs to the V-ATPase E subunit family.

Produces ATP from ADP in the presence of a proton gradient across the membrane. This is V-type ATP synthase subunit E from Deinococcus radiodurans (strain ATCC 13939 / DSM 20539 / JCM 16871 / CCUG 27074 / LMG 4051 / NBRC 15346 / NCIMB 9279 / VKM B-1422 / R1).